The following is a 643-amino-acid chain: Threonine--tRNA ligase (643 aa).

Residues Met-1–Thr-61 enclose the TGS domain. The segment at Asp-243–Pro-534 is catalytic. Residues Cys-334, His-385, and His-511 each contribute to the Zn(2+) site.

Belongs to the class-II aminoacyl-tRNA synthetase family. Homodimer. Zn(2+) is required as a cofactor.

The protein localises to the cytoplasm. The enzyme catalyses tRNA(Thr) + L-threonine + ATP = L-threonyl-tRNA(Thr) + AMP + diphosphate + H(+). Catalyzes the attachment of threonine to tRNA(Thr) in a two-step reaction: L-threonine is first activated by ATP to form Thr-AMP and then transferred to the acceptor end of tRNA(Thr). Also edits incorrectly charged L-seryl-tRNA(Thr). The protein is Threonine--tRNA ligase of Haemophilus influenzae (strain PittEE).